The chain runs to 402 residues: 4-hydroxy-3-methylbut-2-enyl diphosphate reductase (402 aa).

[4Fe-4S] cluster is bound at residue cysteine 66. Residue histidine 96 participates in (2E)-4-hydroxy-3-methylbut-2-enyl diphosphate binding. Histidine 96 is a dimethylallyl diphosphate binding site. Histidine 96 contacts isopentenyl diphosphate. Residue cysteine 157 coordinates [4Fe-4S] cluster. Residue histidine 185 participates in (2E)-4-hydroxy-3-methylbut-2-enyl diphosphate binding. Histidine 185 provides a ligand contact to dimethylallyl diphosphate. Residue histidine 185 participates in isopentenyl diphosphate binding. Glutamate 187 acts as the Proton donor in catalysis. Threonine 250 is a binding site for (2E)-4-hydroxy-3-methylbut-2-enyl diphosphate. Cysteine 288 lines the [4Fe-4S] cluster pocket. Serine 317, serine 318, asparagine 319, and serine 379 together coordinate (2E)-4-hydroxy-3-methylbut-2-enyl diphosphate. Serine 317, serine 318, asparagine 319, and serine 379 together coordinate dimethylallyl diphosphate. 4 residues coordinate isopentenyl diphosphate: serine 317, serine 318, asparagine 319, and serine 379.

It belongs to the IspH family. The cofactor is [4Fe-4S] cluster.

The catalysed reaction is isopentenyl diphosphate + 2 oxidized [2Fe-2S]-[ferredoxin] + H2O = (2E)-4-hydroxy-3-methylbut-2-enyl diphosphate + 2 reduced [2Fe-2S]-[ferredoxin] + 2 H(+). The enzyme catalyses dimethylallyl diphosphate + 2 oxidized [2Fe-2S]-[ferredoxin] + H2O = (2E)-4-hydroxy-3-methylbut-2-enyl diphosphate + 2 reduced [2Fe-2S]-[ferredoxin] + 2 H(+). It participates in isoprenoid biosynthesis; dimethylallyl diphosphate biosynthesis; dimethylallyl diphosphate from (2E)-4-hydroxy-3-methylbutenyl diphosphate: step 1/1. The protein operates within isoprenoid biosynthesis; isopentenyl diphosphate biosynthesis via DXP pathway; isopentenyl diphosphate from 1-deoxy-D-xylulose 5-phosphate: step 6/6. In terms of biological role, catalyzes the conversion of 1-hydroxy-2-methyl-2-(E)-butenyl 4-diphosphate (HMBPP) into a mixture of isopentenyl diphosphate (IPP) and dimethylallyl diphosphate (DMAPP). Acts in the terminal step of the DOXP/MEP pathway for isoprenoid precursor biosynthesis. This Nostoc sp. (strain PCC 7120 / SAG 25.82 / UTEX 2576) protein is 4-hydroxy-3-methylbut-2-enyl diphosphate reductase.